An 83-amino-acid chain; its full sequence is Cytochrome b559 subunit alpha (83 aa).

The helical transmembrane segment at 21–35 (VIHSITIPSLFIAGW) threads the bilayer. His-23 serves as a coordination point for heme.

This sequence belongs to the PsbE/PsbF family. As to quaternary structure, heterodimer of an alpha subunit and a beta subunit. PSII is composed of 1 copy each of membrane proteins PsbA, PsbB, PsbC, PsbD, PsbE, PsbF, PsbH, PsbI, PsbJ, PsbK, PsbL, PsbM, PsbT, PsbX, PsbY, PsbZ, Psb30/Ycf12, at least 3 peripheral proteins of the oxygen-evolving complex and a large number of cofactors. It forms dimeric complexes. The cofactor is heme b.

The protein resides in the plastid. It is found in the chloroplast thylakoid membrane. This b-type cytochrome is tightly associated with the reaction center of photosystem II (PSII). PSII is a light-driven water:plastoquinone oxidoreductase that uses light energy to abstract electrons from H(2)O, generating O(2) and a proton gradient subsequently used for ATP formation. It consists of a core antenna complex that captures photons, and an electron transfer chain that converts photonic excitation into a charge separation. This is Cytochrome b559 subunit alpha from Physcomitrium patens (Spreading-leaved earth moss).